The chain runs to 541 residues: Molybdate transporter 1 (541 aa).

The next 5 membrane-spanning stretches (helical) occupy residues 24–44 (LLLS…PLLL), 58–78 (LLFS…PLPV), 98–118 (TVAA…TGGL), 137–157 (AGMS…GWLW), and 168–188 (GLGE…GLVV). Residues 193–213 (QQQQQQQSGEKPQERRKKRSK) form a disordered region. The next 2 membrane-spanning stretches (helical) occupy residues 214–234 (MPVQ…FAVV) and 287–307 (MAIA…SALA). Positions 317–366 (PQLYADDESSDSPLSPSPSASSSSLSSAPPQTPSAETPKPLSSPTSAEEG) are disordered. Residues 327 to 351 (DSPLSPSPSASSSSLSSAPPQTPSA) show a composition bias toward low complexity. 2 helical membrane-spanning segments follow: residues 413-433 (IILL…PGLL) and 435-455 (LLGK…GVEL). The disordered stretch occupies residues 510–541 (TEKGRGGEQGLLGEEEEEEEQGRVDEESPLLR).

Belongs to the SLC26A/SulP transporter (TC 2.A.53) family.

The protein resides in the vacuole membrane. In terms of biological role, exports stored molybdate from the vacuole into the cytosol, making it available for molybdate cofactor (Moco) biosynthesis. Plays a role in molybdate homeostasis as high cytosolic levels of molybdate are toxic to cells. Not required for molybdate import into cells. The chain is Molybdate transporter 1 from Neurospora crassa (strain ATCC 24698 / 74-OR23-1A / CBS 708.71 / DSM 1257 / FGSC 987).